Here is a 361-residue protein sequence, read N- to C-terminus: Peptide chain release factor 1 (361 aa).

N5-methylglutamine is present on Gln-237.

The protein belongs to the prokaryotic/mitochondrial release factor family. Post-translationally, methylated by PrmC. Methylation increases the termination efficiency of RF1.

The protein resides in the cytoplasm. Its function is as follows. Peptide chain release factor 1 directs the termination of translation in response to the peptide chain termination codons UAG and UAA. This Alcanivorax borkumensis (strain ATCC 700651 / DSM 11573 / NCIMB 13689 / SK2) protein is Peptide chain release factor 1.